We begin with the raw amino-acid sequence, 218 residues long: uncharacterized protein (218 aa).

2 consecutive transmembrane segments (helical) span residues 8–28 (LAVF…ATAG) and 158–178 (ILFY…FLLI).

Its subcellular location is the cell membrane. This is an uncharacterized protein from Mycoplasma genitalium (strain ATCC 33530 / DSM 19775 / NCTC 10195 / G37) (Mycoplasmoides genitalium).